A 376-amino-acid chain; its full sequence is Queuine tRNA-ribosyltransferase (376 aa).

The active-site Proton acceptor is the D93. Substrate is bound by residues 93 to 97 (DSGGF), D147, Q190, and G217. The segment at 248 to 254 (GVGKPDD) is RNA binding. Catalysis depends on D267, which acts as the Nucleophile. Zn(2+)-binding residues include C305, C307, C310, and H336.

It belongs to the queuine tRNA-ribosyltransferase family. Homodimer. Within each dimer, one monomer is responsible for RNA recognition and catalysis, while the other monomer binds to the replacement base PreQ1. The cofactor is Zn(2+).

It carries out the reaction 7-aminomethyl-7-carbaguanine + guanosine(34) in tRNA = 7-aminomethyl-7-carbaguanosine(34) in tRNA + guanine. Its pathway is tRNA modification; tRNA-queuosine biosynthesis. Catalyzes the base-exchange of a guanine (G) residue with the queuine precursor 7-aminomethyl-7-deazaguanine (PreQ1) at position 34 (anticodon wobble position) in tRNAs with GU(N) anticodons (tRNA-Asp, -Asn, -His and -Tyr). Catalysis occurs through a double-displacement mechanism. The nucleophile active site attacks the C1' of nucleotide 34 to detach the guanine base from the RNA, forming a covalent enzyme-RNA intermediate. The proton acceptor active site deprotonates the incoming PreQ1, allowing a nucleophilic attack on the C1' of the ribose to form the product. After dissociation, two additional enzymatic reactions on the tRNA convert PreQ1 to queuine (Q), resulting in the hypermodified nucleoside queuosine (7-(((4,5-cis-dihydroxy-2-cyclopenten-1-yl)amino)methyl)-7-deazaguanosine). This is Queuine tRNA-ribosyltransferase from Jannaschia sp. (strain CCS1).